Reading from the N-terminus, the 673-residue chain is DNA ligase (673 aa).

Residues D38 to D42, S87 to L88, and E119 contribute to the NAD(+) site. The N6-AMP-lysine intermediate role is filled by K121. The NAD(+) site is built by R142, E179, K296, and K320. Positions 414, 417, 432, and 438 each coordinate Zn(2+). A BRCT domain is found at V595–S673.

Belongs to the NAD-dependent DNA ligase family. LigA subfamily. Mg(2+) serves as cofactor. It depends on Mn(2+) as a cofactor.

The catalysed reaction is NAD(+) + (deoxyribonucleotide)n-3'-hydroxyl + 5'-phospho-(deoxyribonucleotide)m = (deoxyribonucleotide)n+m + AMP + beta-nicotinamide D-nucleotide.. DNA ligase that catalyzes the formation of phosphodiester linkages between 5'-phosphoryl and 3'-hydroxyl groups in double-stranded DNA using NAD as a coenzyme and as the energy source for the reaction. It is essential for DNA replication and repair of damaged DNA. The chain is DNA ligase from Coxiella burnetii (strain RSA 493 / Nine Mile phase I).